We begin with the raw amino-acid sequence, 335 residues long: Glutamyl-tRNA reductase (335 aa).

Residues 60–63 (TCHR), S110, 115–117 (ETE), and Q121 each bind substrate. The active-site Nucleophile is C61. Position 189-194 (189-194 (GYSEIN)) interacts with NADP(+).

This sequence belongs to the glutamyl-tRNA reductase family. As to quaternary structure, homodimer.

The catalysed reaction is (S)-4-amino-5-oxopentanoate + tRNA(Glu) + NADP(+) = L-glutamyl-tRNA(Glu) + NADPH + H(+). Its pathway is porphyrin-containing compound metabolism; protoporphyrin-IX biosynthesis; 5-aminolevulinate from L-glutamyl-tRNA(Glu): step 1/2. Its function is as follows. Catalyzes the NADPH-dependent reduction of glutamyl-tRNA(Glu) to glutamate 1-semialdehyde (GSA). The sequence is that of Glutamyl-tRNA reductase from Chlamydia trachomatis serovar D (strain ATCC VR-885 / DSM 19411 / UW-3/Cx).